We begin with the raw amino-acid sequence, 321 residues long: Cytochrome c biogenesis protein CcsA (321 aa).

The next 8 helical transmembrane spans lie at 9–29 (ILTHISFSIISVVITIQLMNL), 44–64 (GMIATFFSITGLLVTRWIYSG), 71–91 (LYESLIFLSWSFSIIHMVPYF), 98–118 (FSAITAPSAIFTQGFATSGLL), 143–163 (MLLSYAALLCGSLLSVALLVI), 225–245 (VISLGFIFLTIGILSGAVWAN), 252–272 (WNWDPKEIWAFITWAIFAIYL), and 286–306 (AIVASIGFLIIWICYFGVNLL).

Belongs to the CcmF/CycK/Ccl1/NrfE/CcsA family. In terms of assembly, may interact with Ccs1.

The protein localises to the plastid. It localises to the chloroplast thylakoid membrane. Its function is as follows. Required during biogenesis of c-type cytochromes (cytochrome c6 and cytochrome f) at the step of heme attachment. The protein is Cytochrome c biogenesis protein CcsA of Acorus calamus var. americanus (American sweet flag).